A 793-amino-acid polypeptide reads, in one-letter code: Coiled-coil domain-containing protein 175 (793 aa).

Coiled coils occupy residues 131–163 (EINT…NEAL), 205–377 (KRED…VLSE), 431–535 (KTVY…MLMK), 562–679 (LPQL…KYRE), and 716–745 (LVDN…QHVS).

This Homo sapiens (Human) protein is Coiled-coil domain-containing protein 175 (CCDC175).